Consider the following 192-residue polypeptide: Ion-translocating oxidoreductase complex subunit B (192 aa).

Residues 1 to 26 (MNAIWIAVAAVSLLGLAFGAILGYAS) form a hydrophobic region. The 4Fe-4S domain maps to 32–91 (EDDPVVEKIDEILPQSQCGQCGYPGCRPYAEAISCNGEKINRCAPGGEAVMLKIAELLNV). [4Fe-4S] cluster contacts are provided by Cys-49, Cys-52, Cys-57, Cys-74, Cys-117, Cys-120, Cys-123, Cys-127, Cys-147, Cys-150, Cys-153, and Cys-157. 2 4Fe-4S ferredoxin-type domains span residues 108–137 (MVAF…GATR) and 138–167 (AMHT…LQPV).

The protein belongs to the 4Fe4S bacterial-type ferredoxin family. RnfB subfamily. The complex is composed of six subunits: RsxA, RsxB, RsxC, RsxD, RsxE and RsxG. [4Fe-4S] cluster serves as cofactor.

The protein localises to the cell inner membrane. In terms of biological role, part of a membrane-bound complex that couples electron transfer with translocation of ions across the membrane. Required to maintain the reduced state of SoxR. The sequence is that of Ion-translocating oxidoreductase complex subunit B from Escherichia coli O17:K52:H18 (strain UMN026 / ExPEC).